A 436-amino-acid polypeptide reads, in one-letter code: UDP-N-acetylmuramate--L-alanine ligase (436 aa).

108–114 (GAHGKTS) is an ATP binding site.

This sequence belongs to the MurCDEF family.

It localises to the cytoplasm. It catalyses the reaction UDP-N-acetyl-alpha-D-muramate + L-alanine + ATP = UDP-N-acetyl-alpha-D-muramoyl-L-alanine + ADP + phosphate + H(+). It participates in cell wall biogenesis; peptidoglycan biosynthesis. In terms of biological role, cell wall formation. The polypeptide is UDP-N-acetylmuramate--L-alanine ligase (Bacillus cereus (strain AH187)).